The chain runs to 172 residues: 3-hydroxydecanoyl-[acyl-carrier-protein] dehydratase (172 aa).

Residue histidine 71 is part of the active site.

This sequence belongs to the thioester dehydratase family. FabA subfamily. As to quaternary structure, homodimer.

Its subcellular location is the cytoplasm. The enzyme catalyses a (3R)-hydroxyacyl-[ACP] = a (2E)-enoyl-[ACP] + H2O. It catalyses the reaction (3R)-hydroxydecanoyl-[ACP] = (2E)-decenoyl-[ACP] + H2O. The catalysed reaction is (2E)-decenoyl-[ACP] = (3Z)-decenoyl-[ACP]. It functions in the pathway lipid metabolism; fatty acid biosynthesis. Functionally, necessary for the introduction of cis unsaturation into fatty acids. Catalyzes the dehydration of (3R)-3-hydroxydecanoyl-ACP to E-(2)-decenoyl-ACP and then its isomerization to Z-(3)-decenoyl-ACP. Can catalyze the dehydratase reaction for beta-hydroxyacyl-ACPs with saturated chain lengths up to 16:0, being most active on intermediate chain length. This Maricaulis maris (strain MCS10) (Caulobacter maris) protein is 3-hydroxydecanoyl-[acyl-carrier-protein] dehydratase.